The chain runs to 480 residues: 2-phosphoxylose phosphatase 1 (480 aa).

Residues 1-6 (MLFRNR) lie on the Cytoplasmic side of the membrane. Residues 7 to 27 (FLLLLALAALLAFVSLSLQFF) traverse the membrane as a helical; Signal-anchor for type II membrane protein segment. Residues 28–480 (HLIPVSTPKN…YYDACHREGF (453 aa)) are Lumenal-facing. Histidine 97 functions as the Nucleophile in the catalytic mechanism. Residues asparagine 305 and asparagine 354 are each glycosylated (N-linked (GlcNAc...) asparagine). Residue aspartate 379 is the Proton donor of the active site.

Belongs to the histidine acid phosphatase family. As to quaternary structure, interacts with B3GAT3; the interaction increases the 2-phosphoxylose phosphatase activity of PXYLP1 during completion of linkage region formation in a B3GAT3-mediated manner. As to expression, widely expressed. Strongly expressed in spleen, fetal liver, moderately in placenta, pancreas, kidney, thymus and colon.

The protein localises to the golgi apparatus membrane. It carries out the reaction 3-O-[beta-D-GlcA-(1-&gt;3)-beta-D-Gal-(1-&gt;3)-beta-D-Gal-(1-&gt;4)-beta-D-2-O-P-Xyl]-L-seryl-[protein] + H2O = 3-O-(beta-D-GlcA-(1-&gt;3)-beta-D-Gal-(1-&gt;3)-beta-D-Gal-(1-&gt;4)-beta-D-Xyl)-L-seryl-[protein] + phosphate. Responsible for the 2-O-dephosphorylation of xylose in the glycosaminoglycan-protein linkage region of proteoglycans thereby regulating the amount of mature glycosaminoglycan (GAG) chains. Sulfated glycosaminoglycans (GAGs), including heparan sulfate and chondroitin sulfate, are synthesized on the so-called common GAG-protein linkage region (GlcUAbeta1-3Galbeta1-3Galbeta1-4Xylbeta1-O-Ser) of core proteins, which is formed by the stepwise addition of monosaccharide residues by the respective specific glycosyltransferases. Xylose 2-O-dephosphorylation during completion of linkage region formation is a prerequisite for the initiation and efficient elongation of the repeating disaccharide region of GAG chains. This Homo sapiens (Human) protein is 2-phosphoxylose phosphatase 1.